The primary structure comprises 1241 residues: ATP-dependent helicase/nuclease subunit A (1241 aa).

The UvrD-like helicase ATP-binding domain occupies 12–485 (SQWTDDQWKA…IDLAKNFRSR (474 aa)). Residue 33-40 (AAAGSGKT) participates in ATP binding. Residues 505–805 (GEIDYDADAE…RIMTIHKSKG (301 aa)) enclose the UvrD-like helicase C-terminal domain.

Belongs to the helicase family. AddA subfamily. As to quaternary structure, heterodimer of AddA and AddB/RexB. Mg(2+) is required as a cofactor.

It catalyses the reaction Couples ATP hydrolysis with the unwinding of duplex DNA by translocating in the 3'-5' direction.. The enzyme catalyses ATP + H2O = ADP + phosphate + H(+). Its function is as follows. The heterodimer acts as both an ATP-dependent DNA helicase and an ATP-dependent, dual-direction single-stranded exonuclease. Recognizes the chi site generating a DNA molecule suitable for the initiation of homologous recombination. The AddA nuclease domain is required for chi fragment generation; this subunit has the helicase and 3' -&gt; 5' nuclease activities. This Bacillus thuringiensis subsp. konkukian (strain 97-27) protein is ATP-dependent helicase/nuclease subunit A.